The sequence spans 154 residues: Urease subunit alpha (154 aa).

Positions 38–154 (GGIDTHIHFI…ADEMDIQVAI (117 aa)) constitute a Urease domain. Positions 43, 45, and 126 each coordinate Ni(2+). An N6-carboxylysine modification is found at K126. A substrate-binding site is contributed by H128.

It belongs to the metallo-dependent hydrolases superfamily. Urease alpha subunit family. Heterotrimer of UreA (gamma), UreB (beta) and UreC (alpha) subunits. Three heterotrimers associate to form the active enzyme. Ni cation is required as a cofactor. Post-translationally, carboxylation allows a single lysine to coordinate two nickel ions.

The protein resides in the cytoplasm. The catalysed reaction is urea + 2 H2O + H(+) = hydrogencarbonate + 2 NH4(+). Its pathway is nitrogen metabolism; urea degradation; CO(2) and NH(3) from urea (urease route): step 1/1. This Photobacterium damselae subsp. damselae (Listonella damsela) protein is Urease subunit alpha (ureC).